A 906-amino-acid chain; its full sequence is Protein translocase subunit SecA (906 aa).

Residues glutamine 89, 107–111, and aspartate 502 each bind ATP; that span reads GEGKT. The segment at 829–898 is disordered; it reads EAPPEPELPP…ACPCGSGKKY (70 aa). Residues 858 to 877 are compositionally biased toward basic and acidic residues; the sequence is WSDHQHDERNVPAAERDPAD. Positions 890, 892, 901, and 902 each coordinate Zn(2+).

It belongs to the SecA family. In terms of assembly, monomer and homodimer. Part of the essential Sec protein translocation apparatus which comprises SecA, SecYEG and auxiliary proteins SecDF-YajC and YidC. Requires Zn(2+) as cofactor.

The protein resides in the cell inner membrane. The protein localises to the cytoplasm. It carries out the reaction ATP + H2O + cellular proteinSide 1 = ADP + phosphate + cellular proteinSide 2.. Functionally, part of the Sec protein translocase complex. Interacts with the SecYEG preprotein conducting channel. Has a central role in coupling the hydrolysis of ATP to the transfer of proteins into and across the cell membrane, serving both as a receptor for the preprotein-SecB complex and as an ATP-driven molecular motor driving the stepwise translocation of polypeptide chains across the membrane. This is Protein translocase subunit SecA from Brucella anthropi (strain ATCC 49188 / DSM 6882 / CCUG 24695 / JCM 21032 / LMG 3331 / NBRC 15819 / NCTC 12168 / Alc 37) (Ochrobactrum anthropi).